The following is a 259-amino-acid chain: Sorbitol-6-phosphate 2-dehydrogenase (259 aa).

An NAD(+)-binding site is contributed by 4–33; that stretch reads VAVVIGGGQTLGAFLCHGLAAEGYRVAVVD. Residue S141 coordinates substrate. Residue Y154 is the Proton acceptor of the active site.

Belongs to the short-chain dehydrogenases/reductases (SDR) family. Homotetramer.

It carries out the reaction D-sorbitol 6-phosphate + NAD(+) = beta-D-fructose 6-phosphate + NADH + H(+). It participates in carbohydrate metabolism; D-sorbitol degradation; D-fructose 6-phosphate from D-sorbitol 6-phosphate: step 1/1. This chain is Sorbitol-6-phosphate 2-dehydrogenase (srlD), found in Escherichia coli (strain K12).